We begin with the raw amino-acid sequence, 130 residues long: Histidine triad nucleotide-binding protein 1 (130 aa).

The region spanning 22–130 is the HIT domain; that stretch reads LFGKIIRKEI…GGRQLQWPPG (109 aa). A Histidine triad motif motif is present at residues 114–118; the sequence is HLHLH.

The polypeptide is Histidine triad nucleotide-binding protein 1 (hint-1) (Caenorhabditis elegans).